Consider the following 552-residue polypeptide: Lysine--tRNA ligase (552 aa).

Residues 72-80 (PSGLPHLGT) carry the 'HIGH' region motif. The short motif at 320–324 (KISKS) is the 'KMSKS' region element. Lysine 323 contacts ATP.

The protein belongs to the class-I aminoacyl-tRNA synthetase family.

It localises to the cytoplasm. It catalyses the reaction tRNA(Lys) + L-lysine + ATP = L-lysyl-tRNA(Lys) + AMP + diphosphate. The protein is Lysine--tRNA ligase of Caulobacter vibrioides (strain ATCC 19089 / CIP 103742 / CB 15) (Caulobacter crescentus).